The sequence spans 323 residues: 8-oxo-dGDP phosphatase NUDT18 (323 aa).

The Nudix hydrolase domain maps to 37 to 167 (RLRKNVCYVV…DILHLVELAA (131 aa)). Residue Leu58 coordinates Mg(2+). Positions 76 to 97 (GRMEPGETIVEALQREVKEEAG) match the Nudix box motif.

Belongs to the Nudix hydrolase family. It depends on Mn(2+) as a cofactor. Mg(2+) serves as cofactor.

The enzyme catalyses 8-oxo-dGDP + H2O = 8-oxo-dGMP + phosphate + H(+). It carries out the reaction 8-oxo-dADP + H2O = 8-oxo-dAMP + phosphate + H(+). The catalysed reaction is 2-oxo-dADP + H2O = 2-oxo-dAMP + phosphate + H(+). It catalyses the reaction 8-oxo-GDP + H2O = 8-oxo-GMP + phosphate + H(+). In terms of biological role, mediates the hydrolysis of oxidized nucleoside diphosphate derivatives. Hydrolyzes 8-oxo-7,8-dihydroguanine (8-oxo-Gua)-containing deoxyribo- and ribonucleoside diphosphates to the monophosphates. Hydrolyzes 8-oxo-dGDP and 8-oxo-GDP with the same efficiencies. Also hydrolyzes 8-OH-dADP and 2-OH-dADP. Exhibited no or minimal hydrolysis activity against 8-oxo-dGTP, 8-oxo-GTP, dGTP, GTP, dGDP and GDP. Probably removes oxidized guanine nucleotides from both the DNA and RNA precursor pools. The sequence is that of 8-oxo-dGDP phosphatase NUDT18 from Homo sapiens (Human).